A 106-amino-acid chain; its full sequence is Small ribosomal subunit protein uS10 (106 aa).

It belongs to the universal ribosomal protein uS10 family. Part of the 30S ribosomal subunit.

In terms of biological role, involved in the binding of tRNA to the ribosomes. The polypeptide is Small ribosomal subunit protein uS10 (Wolbachia pipientis subsp. Culex pipiens (strain wPip)).